The sequence spans 363 residues: L-arabinitol 4-dehydrogenase (363 aa).

Residues C53, H78, E79, C108, C111, C114, C122, and E163 each contribute to the Zn(2+) site. Residues 190–191, D211, R216, I282, and 306–308 contribute to the NAD(+) site; these read PI and QYR.

This sequence belongs to the zinc-containing alcohol dehydrogenase family. Homotetramer. Requires Zn(2+) as cofactor.

It carries out the reaction L-arabinitol + NAD(+) = L-xylulose + NADH + H(+). It participates in carbohydrate degradation; L-arabinose degradation via L-arabinitol; D-xylulose 5-phosphate from L-arabinose (fungal route): step 2/5. Its function is as follows. Catalyzes the NAD-dependent oxidation of L-arabinitol to L-xylulose in the fungal L-arabinose catabolic pathway. L-arabinose catabolism is important for using plant material as a carbon source. Not active on D-arabinitol, D-sorbitol and D-mannitol. The polypeptide is L-arabinitol 4-dehydrogenase (ard-1) (Neurospora crassa (strain ATCC 24698 / 74-OR23-1A / CBS 708.71 / DSM 1257 / FGSC 987)).